We begin with the raw amino-acid sequence, 736 residues long: 1,4-alpha-glucan branching enzyme GlgB (736 aa).

Residue D417 is the Nucleophile of the active site. The Proton donor role is filled by E470.

The protein belongs to the glycosyl hydrolase 13 family. GlgB subfamily. As to quaternary structure, monomer.

The enzyme catalyses Transfers a segment of a (1-&gt;4)-alpha-D-glucan chain to a primary hydroxy group in a similar glucan chain.. Its pathway is glycan biosynthesis; glycogen biosynthesis. Functionally, catalyzes the formation of the alpha-1,6-glucosidic linkages in glycogen by scission of a 1,4-alpha-linked oligosaccharide from growing alpha-1,4-glucan chains and the subsequent attachment of the oligosaccharide to the alpha-1,6 position. The sequence is that of 1,4-alpha-glucan branching enzyme GlgB from Pseudomonas putida (strain ATCC 47054 / DSM 6125 / CFBP 8728 / NCIMB 11950 / KT2440).